A 1167-amino-acid chain; its full sequence is Rhoptry neck protein 2-like protein 2 (1167 aa).

Positions 1-20 (MSSNLAFLSLSLAESTASLG) are cleaved as a signal peptide. The Cytoplasmic portion of the chain corresponds to 21-977 (KSLEETRTRL…WVAKRSRSRK (957 aa)). Positions 55-94 (GPGLSVEGKQTEQMSRKSAEDTRASSLSSDPDDGRAAQLA) are disordered. Over residues 68 to 77 (MSRKSAEDTR) the composition is skewed to basic and acidic residues. A helical membrane pass occupies residues 978-998 (LAIVSVLSLGLIFAYTLLSAL). Topologically, residues 999-1167 (DIAQFLTDSG…TPQRAQDGSR (169 aa)) are extracellular. The cysteines at positions 1015 and 1026 are disulfide-linked.

This sequence belongs to the apicomplexan parasites RON2 family.

The protein resides in the secreted. Its subcellular location is the host cell membrane. May play a role in host cell invasion. This chain is Rhoptry neck protein 2-like protein 2 (RON2L2), found in Toxoplasma gondii (strain ATCC 50611 / Me49).